Reading from the N-terminus, the 241-residue chain is Probable xyloglucan-specific endo-beta-1,4-glucanase A (241 aa).

Residues 1–18 (MKFNLALALSLTVATAEA) form the signal peptide.

Belongs to the glycosyl hydrolase 12 (cellulase H) family.

The protein resides in the secreted. It catalyses the reaction xyloglucan + H2O = xyloglucan oligosaccharides.. Catalyzes endohydrolysis of 1,4-beta-D-glucosidic linkages in xyloglucan with retention of the beta-configuration of the glycosyl residues. Specific for xyloglucan and does not hydrolyze other cell wall components. This chain is Probable xyloglucan-specific endo-beta-1,4-glucanase A (xgeA), found in Aspergillus clavatus (strain ATCC 1007 / CBS 513.65 / DSM 816 / NCTC 3887 / NRRL 1 / QM 1276 / 107).